A 177-amino-acid polypeptide reads, in one-letter code: Large ribosomal subunit protein uL6 (177 aa).

This sequence belongs to the universal ribosomal protein uL6 family. As to quaternary structure, part of the 50S ribosomal subunit.

This protein binds to the 23S rRNA, and is important in its secondary structure. It is located near the subunit interface in the base of the L7/L12 stalk, and near the tRNA binding site of the peptidyltransferase center. The polypeptide is Large ribosomal subunit protein uL6 (Colwellia psychrerythraea (strain 34H / ATCC BAA-681) (Vibrio psychroerythus)).